Reading from the N-terminus, the 442-residue chain is Pyruvate dehydrogenase complex protein X component, mitochondrial (442 aa).

Residues 1–35 constitute a mitochondrion transit peptide; the sequence is MASLAAACRVSARLAARKLQHDAAVRGFRSSAAAL. The 77-residue stretch at 37–113 folds into the Lipoyl-binding domain; sequence AQNFMMPALS…QVGTRIAVVA (77 aa). Lys78 bears the N6-lipoyllysine mark. The interval 119–169 is disordered; the sequence is ITKLEIPPDEGPQQLKAAAPAPAPTPAPAPASPQPQFAAPTPSPPKASTKV. Pro residues predominate over residues 139–151; sequence APAPTPAPAPASP. The span at 152–169 shows a compositional bias: low complexity; sequence QPQFAAPTPSPPKASTKV. One can recognise a Peripheral subunit-binding (PSBD) domain in the interval 175-215; it reads PLLPSVHQLIKENGLDESAVSNITPTGPGGRILKGDVLAYL. Positions 244 to 269 are disordered; it reads AKPVEPEKPQEEKASAPAPAPRAPEP. The segment covering 245 to 257 has biased composition (basic and acidic residues); it reads KPVEPEKPQEEKA. Residues 317 to 336 are interaction to the E2 core; that stretch reads PLPTNYQPTADELFDQVLGL.

It belongs to the 2-oxoacid dehydrogenase family. As to quaternary structure, eukaryotic pyruvate dehydrogenase (PDH) complexes are organized as a core consisting of the oligomeric dihydrolipoamide acetyl-transferase (E2), around which are arranged multiple copies of pyruvate dehydrogenase (E1), dihydrolipoamide dehydrogenase (E3) and protein X (E3BP) bound by non-covalent bonds. The Chaetomium thermophilum PDH complex contains 60 E2 units, 12 E3BP units, about 20 E1 units, and 12 or more E3 units. The units are organized in 1 E2 60-mer, 4 E3BP trimers, about 20 E1 tetramers, and a maximum of 12 E3 dimers. The E3BP trimers are bound inside the icosahedral core with tetrahedral symmetry.

The protein localises to the mitochondrion. The 10-megadalton pyruvate dehydrogenase complex contains multiple copies of three enzymatic components: pyruvate dehydrogenase (E1), dihydrolipoamide acetyltransferase (E2) and lipoamide dehydrogenase (E3) and catalyzes the overall oxidative decarboxylation of pyruvate to form acetyl-CoA and CO(2). E3BP is responsible for tethering E3 in proximity to the core, forming the entire metabolon, and the number of E3s is limited by the number of E3BPs. Within the complex, pyruvate and thiamine pyrophosphate (TPP or vitamin B1) are bound by pyruvate dehydrogenase E1 subunits alpha and beta and pyruvate is decarboxylated leading to the 2-carbon hydrohyethyl bound to TPP. The E2 component contains covalently-bound lipoyl cofactors and transfers the hydroxyethyl group from TPP to an oxidized form of covalently bound lipoamide, and the resulting acetyl group is then transferred to free coenzyme A to form acetyl-CoA and reduced dihydrolipoamide-E2. Finally, the flavoprotein dihydrolipoamide dehydrogenase (E3) re-oxidizes the lipoyl group of dihydrolipoamide-E2 to form lipoamide-E2 and NADH. A fourth subunit, E3BP, is responsible for tethering E3 in proximity to the core, forming the entire metabolon. The sequence is that of Pyruvate dehydrogenase complex protein X component, mitochondrial from Chaetomium thermophilum (strain DSM 1495 / CBS 144.50 / IMI 039719) (Thermochaetoides thermophila).